The following is a 335-amino-acid chain: Galactinol synthase 2 (335 aa).

Lys103 is an active-site residue. Mn(2+) is bound by residues Asp119, Asp121, and His257.

Belongs to the glycosyltransferase 8 family. Galactosyltransferase subfamily. A divalent metal cation serves as cofactor. As to expression, accumulates in mature seeds.

Its subcellular location is the cytoplasm. The enzyme catalyses myo-inositol + UDP-alpha-D-galactose = alpha-D-galactosyl-(1-&gt;3)-1D-myo-inositol + UDP + H(+). Galactinol synthase involved in the biosynthesis of raffinose family oligosaccharides (RFOs) that function as osmoprotectants. Promotes stress tolerance of factors such as drought, chilling, salinity and methylviologen (MV), a superoxide radical generating drug, by mediating an increase in levels of the endogenous osmoprotective compounds, galactinol and raffinose. In Arabidopsis thaliana (Mouse-ear cress), this protein is Galactinol synthase 2 (GOLS2).